A 314-amino-acid chain; its full sequence is 4-hydroxy-3-methylbut-2-enyl diphosphate reductase (314 aa).

Cys-12 contributes to the [4Fe-4S] cluster binding site. Positions 41 and 74 each coordinate (2E)-4-hydroxy-3-methylbut-2-enyl diphosphate. 2 residues coordinate dimethylallyl diphosphate: His-41 and His-74. Residues His-41 and His-74 each coordinate isopentenyl diphosphate. Cys-96 contributes to the [4Fe-4S] cluster binding site. His-124 lines the (2E)-4-hydroxy-3-methylbut-2-enyl diphosphate pocket. His-124 provides a ligand contact to dimethylallyl diphosphate. His-124 contributes to the isopentenyl diphosphate binding site. Residue Glu-126 is the Proton donor of the active site. (2E)-4-hydroxy-3-methylbut-2-enyl diphosphate is bound at residue Thr-167. Residue Cys-197 participates in [4Fe-4S] cluster binding. (2E)-4-hydroxy-3-methylbut-2-enyl diphosphate contacts are provided by Ser-225, Ser-226, Asn-227, and Ser-269. Dimethylallyl diphosphate is bound by residues Ser-225, Ser-226, Asn-227, and Ser-269. Isopentenyl diphosphate contacts are provided by Ser-225, Ser-226, Asn-227, and Ser-269.

It belongs to the IspH family. It depends on [4Fe-4S] cluster as a cofactor.

The enzyme catalyses isopentenyl diphosphate + 2 oxidized [2Fe-2S]-[ferredoxin] + H2O = (2E)-4-hydroxy-3-methylbut-2-enyl diphosphate + 2 reduced [2Fe-2S]-[ferredoxin] + 2 H(+). The catalysed reaction is dimethylallyl diphosphate + 2 oxidized [2Fe-2S]-[ferredoxin] + H2O = (2E)-4-hydroxy-3-methylbut-2-enyl diphosphate + 2 reduced [2Fe-2S]-[ferredoxin] + 2 H(+). Its pathway is isoprenoid biosynthesis; dimethylallyl diphosphate biosynthesis; dimethylallyl diphosphate from (2E)-4-hydroxy-3-methylbutenyl diphosphate: step 1/1. The protein operates within isoprenoid biosynthesis; isopentenyl diphosphate biosynthesis via DXP pathway; isopentenyl diphosphate from 1-deoxy-D-xylulose 5-phosphate: step 6/6. Catalyzes the conversion of 1-hydroxy-2-methyl-2-(E)-butenyl 4-diphosphate (HMBPP) into a mixture of isopentenyl diphosphate (IPP) and dimethylallyl diphosphate (DMAPP). Acts in the terminal step of the DOXP/MEP pathway for isoprenoid precursor biosynthesis. In Haemophilus ducreyi (strain 35000HP / ATCC 700724), this protein is 4-hydroxy-3-methylbut-2-enyl diphosphate reductase.